Here is a 372-residue protein sequence, read N- to C-terminus: Chorismate synthase (372 aa).

NADP(+) is bound by residues Arg48 and Arg54. Residues 125–127 (RSS), 238–239 (NA), Gly278, 293–297 (KPTSS), and Arg319 each bind FMN.

The protein belongs to the chorismate synthase family. Homotetramer. FMNH2 serves as cofactor.

The enzyme catalyses 5-O-(1-carboxyvinyl)-3-phosphoshikimate = chorismate + phosphate. Its pathway is metabolic intermediate biosynthesis; chorismate biosynthesis; chorismate from D-erythrose 4-phosphate and phosphoenolpyruvate: step 7/7. Functionally, catalyzes the anti-1,4-elimination of the C-3 phosphate and the C-6 proR hydrogen from 5-enolpyruvylshikimate-3-phosphate (EPSP) to yield chorismate, which is the branch point compound that serves as the starting substrate for the three terminal pathways of aromatic amino acid biosynthesis. This reaction introduces a second double bond into the aromatic ring system. The sequence is that of Chorismate synthase from Xylella fastidiosa (strain 9a5c).